The following is a 582-amino-acid chain: 2-succinyl-5-enolpyruvyl-6-hydroxy-3-cyclohexene-1-carboxylate synthase (582 aa).

Belongs to the TPP enzyme family. MenD subfamily. Homodimer. The cofactor is Mg(2+). Requires Mn(2+) as cofactor. It depends on thiamine diphosphate as a cofactor.

It catalyses the reaction isochorismate + 2-oxoglutarate + H(+) = 5-enolpyruvoyl-6-hydroxy-2-succinyl-cyclohex-3-ene-1-carboxylate + CO2. Its pathway is quinol/quinone metabolism; 1,4-dihydroxy-2-naphthoate biosynthesis; 1,4-dihydroxy-2-naphthoate from chorismate: step 2/7. It functions in the pathway cofactor biosynthesis; phylloquinone biosynthesis. Catalyzes the thiamine diphosphate-dependent decarboxylation of 2-oxoglutarate and the subsequent addition of the resulting succinic semialdehyde-thiamine pyrophosphate anion to isochorismate to yield 2-succinyl-5-enolpyruvyl-6-hydroxy-3-cyclohexene-1-carboxylate (SEPHCHC). In Prochlorococcus marinus (strain MIT 9303), this protein is 2-succinyl-5-enolpyruvyl-6-hydroxy-3-cyclohexene-1-carboxylate synthase.